Consider the following 437-residue polypeptide: Glucose-1-phosphate adenylyltransferase (437 aa).

Alpha-D-glucose 1-phosphate-binding positions include Tyr-113, Gly-179, 194–195, and Ser-212; that span reads EK.

The protein belongs to the bacterial/plant glucose-1-phosphate adenylyltransferase family. Homotetramer.

The enzyme catalyses alpha-D-glucose 1-phosphate + ATP + H(+) = ADP-alpha-D-glucose + diphosphate. The protein operates within glycan biosynthesis; glycogen biosynthesis. Functionally, involved in the biosynthesis of ADP-glucose, a building block required for the elongation reactions to produce glycogen. Catalyzes the reaction between ATP and alpha-D-glucose 1-phosphate (G1P) to produce pyrophosphate and ADP-Glc. This Haemophilus influenzae (strain ATCC 51907 / DSM 11121 / KW20 / Rd) protein is Glucose-1-phosphate adenylyltransferase.